The primary structure comprises 349 residues: MDLFDRINKLKEEGLNEIKQAENQKMLDKIRVELMGRKGELTEILHSMKDIAPENRPKVGQEVNQVRDLFQKQLDEAKNNFLQTLIAKKLEEEKIDVTLPGREGHLGSKHPINIILDDLESYFIGMGYEVVQGPEIETDHYVFEMMNLPKDHPARDMQATFYIDEENLLRTQTSGDQARVLEKHDFSKGPLKMVGPGKVYRRDDDDATHSHQFQQMEGLVIDKNVTMSDLKGTLEMIAKHVFGQDRKTRLRPSYFPFTEPSVEMDVSCFNCDGKGCPICKYTGWIEVLGAGMVHPNVLENAGVDSTVYGGFAFGLGLDRFAILKYGISDIRDFYTNDVRFLAQFRKEED.

Position 259 (E259) interacts with Mg(2+).

It belongs to the class-II aminoacyl-tRNA synthetase family. Phe-tRNA synthetase alpha subunit type 1 subfamily. In terms of assembly, tetramer of two alpha and two beta subunits. Mg(2+) serves as cofactor.

The protein resides in the cytoplasm. The enzyme catalyses tRNA(Phe) + L-phenylalanine + ATP = L-phenylalanyl-tRNA(Phe) + AMP + diphosphate + H(+). The polypeptide is Phenylalanine--tRNA ligase alpha subunit (Lactobacillus johnsonii (strain CNCM I-12250 / La1 / NCC 533)).